Reading from the N-terminus, the 75-residue chain is Defensin J1-1 (75 aa).

Residues 1 to 27 form the signal peptide; the sequence is MAGFSKVVATIFLMMLLVFATDMMAEA. Intrachain disulfides connect Cys30-Cys74, Cys41-Cys61, Cys47-Cys68, and Cys51-Cys70.

The protein belongs to the DEFL family. Monomer. As to expression, expressed in orange and red ripe fruit and to a lesser extent in mature, green fruit. Present in trace in young, green fruit.

The protein resides in the secreted. Its function is as follows. Plant defense peptide with antifungal activity against F.oxysporum and B.cinerea. In Capsicum annuum (Capsicum pepper), this protein is Defensin J1-1.